The chain runs to 757 residues: Myb-related protein A (757 aa).

3 consecutive HTH myb-type domains span residues 30–81 (KKIC…QKVL), 82–137 (NPEL…NPEV), and 138–188 (KKSS…RRKV). 3 consecutive DNA-binding regions (H-T-H motif) follow at residues 58–81 (WAFIASHLQNRSDFQCQHRWQKVL), 110–133 (WSLIAKHLKGRIGKQCRERWHNHL), and 161–184 (WAEIAKLLPGRTDNSIKNHWNSTM). Positions 187–209 (KVEQEGYLQDGTKSSSERTGSST) are disordered. A compositionally biased stretch (polar residues) spans 197–209 (GTKSSSERTGSST). Residues 235-300 (IPVYQYASPE…RLSSQAGSLP (66 aa)) are transcriptional activation domain. The interval 303-558 (SGSFVMEDCV…IRRSLLGSTP (256 aa)) is negative regulatory domain.

Component of the DREAM complex. Expressed ubiquitously.

The protein localises to the nucleus. Strong transcriptional activator; DNA-binding protein that specifically recognize the sequence 5'-YAAC[GT]G-3'. Could have a role in the proliferation and/or differentiation of neurogenic, spermatogenic and B-lymphoid cells. This is Myb-related protein A (MYBL1) from Gallus gallus (Chicken).